A 276-amino-acid polypeptide reads, in one-letter code: Pantothenate synthetase (276 aa).

Residue 27 to 34 (MGALHRGH) participates in ATP binding. The active-site Proton donor is the His-34. Gln-58 is a (R)-pantoate binding site. Residue Gln-58 participates in beta-alanine binding. 147 to 150 (GKKD) provides a ligand contact to ATP. Residue Gln-153 coordinates (R)-pantoate. ATP contacts are provided by residues Val-176 and 184–187 (LSSR).

The protein belongs to the pantothenate synthetase family. As to quaternary structure, homodimer.

The protein localises to the cytoplasm. The catalysed reaction is (R)-pantoate + beta-alanine + ATP = (R)-pantothenate + AMP + diphosphate + H(+). Its pathway is cofactor biosynthesis; (R)-pantothenate biosynthesis; (R)-pantothenate from (R)-pantoate and beta-alanine: step 1/1. Its function is as follows. Catalyzes the condensation of pantoate with beta-alanine in an ATP-dependent reaction via a pantoyl-adenylate intermediate. In Helicobacter pylori (strain G27), this protein is Pantothenate synthetase.